Here is a 2724-residue protein sequence, read N- to C-terminus: Eukaryotic translation initiation factor 2-alpha kinase 2 (2724 aa).

Over 1–24 (MLNMVDQKKGINNGSSTGVINNIN) the chain is Cytoplasmic. The chain crosses the membrane as a helical span at residues 25–45 (GKIKNEFIFMYLIAAGGFSCV). Over 46–673 (YKIKKKKSNK…KFYIKRHNQK (628 aa)) the chain is Extracellular. The interval 112–153 (KRERRGRRKEQQREQMGDKRREKRQQQRREKRKEQNTNTKKR) is disordered. Basic and acidic residues predominate over residues 120–146 (KEQQREQMGDKRREKRQQQRREKRKEQ). A helical transmembrane segment spans residues 674–694 (TYFFENIIFYHYIIMLFLDIE). Over 695 to 718 (KYKNKFVSLFQYNLYRKLLKISKR) the chain is Cytoplasmic. A helical membrane pass occupies residues 719–739 (IVLMLHRIETNVICIFLLKHF). Residues 740–800 (EDYFIRKGIH…KKNIFNFFIE (61 aa)) are Extracellular-facing. The chain crosses the membrane as a helical span at residues 801-821 (LFLNNIQINIFKKFEILYLII). The Cytoplasmic portion of the chain corresponds to 822 to 832 (YFYNYFEKSKQ). Residues 833–853 (FDIEGIGDIIYVWLSLINLFY) traverse the membrane as a helical segment. The Extracellular portion of the chain corresponds to 854 to 876 (DDKGKCIKILSKIFAKLNKKLYY). Residues 877-897 (VYWGKLYIIMNWTTIVDTIFI) traverse the membrane as a helical segment. Residues 898-908 (RNVLSINREGN) lie on the Cytoplasmic side of the membrane. Residues 909–929 (YYWVIIVLKMINYFVNVAYTL) traverse the membrane as a helical segment. The Extracellular segment spans residues 930-996 (TRMDIFFIKV…KKNYDIYTKY (67 aa)). A helical membrane pass occupies residues 997–1017 (AILFIYCFIIQAYYFDTLFNI). Over 1018–2724 (RSLESNEIAN…GDIFLPDKCP (1707 aa)) the chain is Cytoplasmic. K2029 is an ATP binding site. Residues 2084–2719 (KHYFTKCGIL…KIISAGDIFL (636 aa)) enclose the Protein kinase domain. A coiled-coil region spans residues 2120–2155 (INTLNEENQNMFCKNKEKKEENYKKIDTNISQFSEK). D2229 serves as the catalytic Proton acceptor. Residues 2479–2507 (EKMDKNKIAAQKKKKKKENKHPIGRRSTN) form a disordered region. Residues 2488 to 2502 (AQKKKKKKENKHPIG) are compositionally biased toward basic residues.

This sequence belongs to the protein kinase superfamily. Ser/Thr protein kinase family. GCN2 subfamily. Auto-phosphorylated.

The protein resides in the membrane. The enzyme catalyses L-seryl-[protein] + ATP = O-phospho-L-seryl-[protein] + ADP + H(+). It carries out the reaction L-threonyl-[protein] + ATP = O-phospho-L-threonyl-[protein] + ADP + H(+). Phosphorylates translation factor eIF2alpha in salivary gland sporozoites during dormancy, which leads to an inhibition of protein translation and accumulation of stalled mRNAs into granules. The polypeptide is Eukaryotic translation initiation factor 2-alpha kinase 2 (Plasmodium berghei (strain Anka)).